Consider the following 349-residue polypeptide: tRNA N6-adenosine threonylcarbamoyltransferase (349 aa).

Residues H115 and H119 each contribute to the Fe cation site. Substrate-binding positions include 137–141, D170, G183, and N281; that span reads LASGG. A Fe cation-binding site is contributed by D309.

It belongs to the KAE1 / TsaD family. Requires Fe(2+) as cofactor.

Its subcellular location is the cytoplasm. The enzyme catalyses L-threonylcarbamoyladenylate + adenosine(37) in tRNA = N(6)-L-threonylcarbamoyladenosine(37) in tRNA + AMP + H(+). Its function is as follows. Required for the formation of a threonylcarbamoyl group on adenosine at position 37 (t(6)A37) in tRNAs that read codons beginning with adenine. Is involved in the transfer of the threonylcarbamoyl moiety of threonylcarbamoyl-AMP (TC-AMP) to the N6 group of A37, together with TsaE and TsaB. TsaD likely plays a direct catalytic role in this reaction. The chain is tRNA N6-adenosine threonylcarbamoyltransferase from Methylobacterium nodulans (strain LMG 21967 / CNCM I-2342 / ORS 2060).